A 415-amino-acid chain; its full sequence is Multidrug resistance protein MdtA (415 aa).

Positions methionine 1–alanine 21 are cleaved as a signal peptide. Disordered regions lie at residues serine 32–alanine 56 and glutamate 392–serine 415. Residues serine 399–serine 415 are compositionally biased toward basic and acidic residues.

Belongs to the membrane fusion protein (MFP) (TC 8.A.1) family. As to quaternary structure, part of a tripartite efflux system composed of MdtA, MdtB and MdtC.

It localises to the cell inner membrane. The MdtABC tripartite complex confers resistance against novobiocin and deoxycholate. This Escherichia coli O7:K1 (strain IAI39 / ExPEC) protein is Multidrug resistance protein MdtA.